The chain runs to 168 residues: G/U mismatch-specific DNA glycosylase (168 aa).

It belongs to the uracil-DNA glycosylase (UDG) superfamily. TDG/mug family. As to quaternary structure, binds DNA as a monomer.

It is found in the cytoplasm. It catalyses the reaction Specifically hydrolyzes mismatched double-stranded DNA and polynucleotides, releasing free uracil.. In terms of biological role, excises ethenocytosine and uracil, which can arise by alkylation or deamination of cytosine, respectively, from the corresponding mispairs with guanine in ds-DNA. It is capable of hydrolyzing the carbon-nitrogen bond between the sugar-phosphate backbone of the DNA and the mispaired base. The complementary strand guanine functions in substrate recognition. Required for DNA damage lesion repair in stationary-phase cells. In Salmonella gallinarum (strain 287/91 / NCTC 13346), this protein is G/U mismatch-specific DNA glycosylase.